A 363-amino-acid chain; its full sequence is Transcription factor Sox-18A (363 aa).

The disordered stretch occupies residues 20 to 66; that stretch reads NSTWVPPADTVPEVSLIPSSPPAPDSPAPSPKPGYGFSTCEEKHGDP. Positions 38–51 are enriched in pro residues; it reads SSPPAPDSPAPSPK. The segment at residues 68-136 is a DNA-binding region (HMG box); sequence IRRPMNAFMV…QHLQDHPNYK (69 aa). Interaction with DNA stretches follow at residues 70 to 83 and 94 to 106; these read RPMNAFMVWAKDER and HNAVLSKMLGQSW. The tract at residues 129–163 is disordered; the sequence is LQDHPNYKYRPRRKKQAKKLKRMDPSPLLRNEGFT. Over residues 135–149 the composition is skewed to basic residues; the sequence is YKYRPRRKKQAKKLK. The interval 149-210 is important for transcriptional activation; sequence KRMDPSPLLR…VLEPSEPAFF (62 aa). In terms of domain architecture, Sox C-terminal spans 236–362; it reads KTMREISLPY…TAMYYTPCIT (127 aa). The 9aaTAD motif lies at 308–316; sequence NEFDQYLNM.

In terms of tissue distribution, expressed in the adult spleen, lung, heart and kidney, and at a lower level in the adult testis, liver and brain.

It localises to the nucleus. Functionally, probable transcription factor. Binds to the consensus DNA sequence 5'-AACAAT-3'. Also binds 5'-CACAAT-3' and 5'-AATAAT-3' with similar affinity. This chain is Transcription factor Sox-18A (sox18-a), found in Xenopus laevis (African clawed frog).